Consider the following 372-residue polypeptide: DNA replication and repair protein RecF (372 aa).

Position 30–37 (30–37 (GENGQGKT)) interacts with ATP.

Belongs to the RecF family.

It localises to the cytoplasm. Its function is as follows. The RecF protein is involved in DNA metabolism; it is required for DNA replication and normal SOS inducibility. RecF binds preferentially to single-stranded, linear DNA. It also seems to bind ATP. In Anaeromyxobacter sp. (strain K), this protein is DNA replication and repair protein RecF.